The sequence spans 160 residues: Peripheral myelin protein 22 (160 aa).

Residue methionine 1 is a topological domain, cytoplasmic. A helical transmembrane segment spans residues 2-31 (LLLLLGILFLHIAVLVLLFVSTIVSQWLVG). The Extracellular portion of the chain corresponds to 32 to 64 (NGHRTDLWQNCTTSALGAVQHCYSSSVSEWLQS). A glycan (N-linked (GlcNAc...) asparagine) is linked at asparagine 41. The chain crosses the membrane as a helical span at residues 65–91 (VQATMILSVIFSVLSLFLFFCQLFTLT). Topologically, residues 92 to 95 (KGGR) are cytoplasmic. A helical transmembrane segment spans residues 96–119 (FYITGVFQILAGLCVMSAAAIYTV). The Extracellular portion of the chain corresponds to 120–133 (RHSEWHVNNDYSYG). Residues 134 to 156 (FAYILAWVAFPLALLSGIIYVIL) form a helical membrane-spanning segment. Topologically, residues 157-160 (RKRE) are cytoplasmic.

The protein belongs to the PMP-22/EMP/MP20 family. In terms of processing, ubiquitinated by the DCX(DCAF13) E3 ubiquitin ligase complex, leading to its degradation. As to expression, found exclusively in the peripheral nervous system. Present in both myelinating and nonmyelinating Schwann cells. Found in the tumors of Schwann cell lineage where axons are present (neurofibromas) but not where axons are absent (schwannomas).

It is found in the cell membrane. Functionally, might be involved in growth regulation, and in myelinization in the peripheral nervous system. The chain is Peripheral myelin protein 22 (Pmp22) from Rattus norvegicus (Rat).